Reading from the N-terminus, the 432-residue chain is 3-phosphoshikimate 1-carboxyvinyltransferase (432 aa).

3-phosphoshikimate is bound by residues Lys-23, Ser-24, and Arg-28. Residue Lys-23 coordinates phosphoenolpyruvate. 2 residues coordinate phosphoenolpyruvate: Gly-96 and Arg-125. Ser-170, Gln-172, Asp-318, and Lys-345 together coordinate 3-phosphoshikimate. Residue Gln-172 participates in phosphoenolpyruvate binding. Asp-318 acts as the Proton acceptor in catalysis. Phosphoenolpyruvate contacts are provided by Arg-349 and Arg-391.

Belongs to the EPSP synthase family. As to quaternary structure, monomer.

It is found in the cytoplasm. It carries out the reaction 3-phosphoshikimate + phosphoenolpyruvate = 5-O-(1-carboxyvinyl)-3-phosphoshikimate + phosphate. Its pathway is metabolic intermediate biosynthesis; chorismate biosynthesis; chorismate from D-erythrose 4-phosphate and phosphoenolpyruvate: step 6/7. Its function is as follows. Catalyzes the transfer of the enolpyruvyl moiety of phosphoenolpyruvate (PEP) to the 5-hydroxyl of shikimate-3-phosphate (S3P) to produce enolpyruvyl shikimate-3-phosphate and inorganic phosphate. In Gloeobacter violaceus (strain ATCC 29082 / PCC 7421), this protein is 3-phosphoshikimate 1-carboxyvinyltransferase.